We begin with the raw amino-acid sequence, 337 residues long: 2-oxoglutarate receptor 1 (337 aa).

Residues 1–34 are Extracellular-facing; it reads MNEPLDYLANASDFPDYAAAFGNCTDENIPLKMH. N-linked (GlcNAc...) asparagine glycosylation is found at asparagine 10 and asparagine 23. The helical transmembrane segment at 35–55 threads the bilayer; that stretch reads YLPVIYGIIFLVGFPGNAVVI. Over 56 to 69 the chain is Cytoplasmic; sequence STYIFKMRPWKSST. A helical transmembrane segment spans residues 70–90; it reads IIMLNLACTDLLYLTSLPFLI. Over 91 to 116 the chain is Extracellular; sequence HYYASGENWIFGDFMCKFIRFSFHFN. Cysteine 106 and cysteine 183 are oxidised to a cystine. Residues 117 to 137 traverse the membrane as a helical segment; it reads LYSSILFLTCFSIFRYCVIIH. The Cytoplasmic portion of the chain corresponds to 138 to 151; it reads PMSCFSIHKTRCAV. A helical transmembrane segment spans residues 152-172; the sequence is VACAVVWIISLVAVIPMTFLI. The Extracellular portion of the chain corresponds to 173-201; the sequence is TSTNRTNRSACLDLTSSDELNTIKWYNLI. N-linked (GlcNAc...) asparagine glycosylation is found at asparagine 176 and asparagine 179. The helical transmembrane segment at 202-222 threads the bilayer; sequence LTATTFCLPLVIVTLCYTTII. Residues 223-242 lie on the Cytoplasmic side of the membrane; it reads HTLTHGLQTDSCLKQKARRL. A helical membrane pass occupies residues 243–263; that stretch reads TILLLLAFYVCFLPFHILRVI. Over 264 to 284 the chain is Extracellular; that stretch reads RIESRLLSISCSIENQIHEAY. The helical transmembrane segment at 285–305 threads the bilayer; sequence IVSRPLAALNTFGNLLLYVVV. At 306–337 the chain is on the cytoplasmic side; the sequence is SDNFQQAVCSTVRCKVSGNLEQAKKISYSNNP.

It belongs to the G-protein coupled receptor 1 family. In terms of tissue distribution, detected in kidney and, to a lower extent, in placenta. Not detected in brain tissues including the frontal cortex, caudate putamen, thalamus, hypothalamus, hippocampus or pons.

Its subcellular location is the cell membrane. In terms of biological role, g protein-coupled receptor for dicarboxylates and amino dicarboxylates. Receptor for itaconate, a metabolite produced by myeloid lineages. In the respiratory epithelium, couples the binding of itaconate to the activation of GNA11 and downstream intracellular Ca(2+) release, leading to mucocilliary clearance of airborne pathogens. Receptor for leukotriene E4 (LTE4) produced by mast cells upon allergic inflammation. Binds with high affinity to LTE4 and elicits mucin release from pulmonary epithelium in response to airborne fungi allergens. Regulates mucin-producing goblet cell homeostasis. Receptor for alpha-ketoglutarate produced by proximal tubule renal cells upon metabolic alkalosis. In an intrarenal paracrine signaling pathway, binds alpha-ketoglutarate and drives transepithelial salt reabsorption and bicarbonate secretion by SLC26A4/pendrin-positive intercalated cells. The chain is 2-oxoglutarate receptor 1 (OXGR1) from Homo sapiens (Human).